The chain runs to 64 residues: MATVKFKYKGEEKQVDISKIKKVWRVGKMISFTYDEGGGKTGRGAVSEKDAPKELLQMLEKQKK.

Residues K5 and K7 each carry the N6-methyllysine; partial modification.

Belongs to the 7 kDa DNA-binding/endoribonuclease P2 family. In terms of assembly, homodimer. Post-translationally, lys-5 and Lys-7 were found to be 60% monomethylated. In terms of processing, ADP-ribosylated by endogenous proteins in vitro.

Can constrain negative DNA supercoils. May be involved in maintaining the integrity of the genome at high temperature. Has RNA endonuclease activity with a narrow substrate specificity; the cleavage products are 3'-phosphooligonucleotides. This chain is DNA-binding protein 7a (sso7a1), found in Saccharolobus solfataricus (strain ATCC 35092 / DSM 1617 / JCM 11322 / P2) (Sulfolobus solfataricus).